The sequence spans 349 residues: uncharacterized protein (349 aa).

The N-terminal stretch at 1-25 is a signal peptide; sequence MNKYIKQGAPILGILLAVMFGGREG.

It belongs to the bacterial solute-binding protein 1 family. WtpA subfamily.

This is an uncharacterized protein from Methanococcus aeolicus (strain ATCC BAA-1280 / DSM 17508 / OCM 812 / Nankai-3).